The following is a 204-amino-acid chain: Large ribosomal subunit protein uL4 (204 aa).

The tract at residues 53–74 (AYVSGGGKKPWRQKGRGGARAG) is disordered.

Belongs to the universal ribosomal protein uL4 family. Part of the 50S ribosomal subunit.

Its function is as follows. One of the primary rRNA binding proteins, this protein initially binds near the 5'-end of the 23S rRNA. It is important during the early stages of 50S assembly. It makes multiple contacts with different domains of the 23S rRNA in the assembled 50S subunit and ribosome. In terms of biological role, forms part of the polypeptide exit tunnel. This chain is Large ribosomal subunit protein uL4, found in Campylobacter curvus (strain 525.92).